The following is a 120-amino-acid chain: U13-lycotoxin-Ls1c (120 aa).

Residues 1–16 form the signal peptide; the sequence is MKILFVLISILYAVYC. A propeptide spanning residues 17-54 is cleaved from the precursor; it reads FSSEEDVDSAYLANELEPVEDINSEQYAALEPKEEQER. Cystine bridges form between cysteine 56/cysteine 70, cysteine 69/cysteine 87, and cysteine 78/cysteine 85. In terms of domain architecture, Agouti spans 56–95; that stretch reads CADMGQDRKDDCDCCLNIATCNCWFGRYFCSCTFGDYQTC.

This sequence belongs to the neurotoxin 05 (agouti) family. Post-translationally, contains 5 disulfide bonds. In terms of tissue distribution, expressed by the venom gland.

Its subcellular location is the secreted. This chain is U13-lycotoxin-Ls1c, found in Lycosa singoriensis (Wolf spider).